We begin with the raw amino-acid sequence, 286 residues long: Rhomboid-type serine protease 2 (286 aa).

6 helical membrane passes run 18 to 38, 66 to 86, 99 to 119, 122 to 142, 164 to 183, and 188 to 210; these read ITQY…LLVI, SFYL…VGLF, VFTG…FCIV, LLYP…FMSF, VSIP…MVLI, and FWGH…KFLY. S133 functions as the Nucleophile in the catalytic mechanism. H191 is an active-site residue.

It belongs to the peptidase S54 family.

The protein resides in the golgi apparatus membrane. It is found in the golgi apparatus. Its subcellular location is the cis-Golgi network membrane. It catalyses the reaction Cleaves type-1 transmembrane domains using a catalytic dyad composed of serine and histidine that are contributed by different transmembrane domains.. Functionally, probable rhomboid-type serine protease that catalyzes intramembrane proteolysis. The chain is Rhomboid-type serine protease 2 (RBD2) from Debaryomyces hansenii (strain ATCC 36239 / CBS 767 / BCRC 21394 / JCM 1990 / NBRC 0083 / IGC 2968) (Yeast).